The chain runs to 349 residues: ATPase GET3 (349 aa).

An ATP-binding site is contributed by 26–33 (KGGVGKTT). Asp57 is a catalytic residue. Residues Glu242 and Asn269 each coordinate ATP. 2 residues coordinate Zn(2+): Cys281 and Cys284.

Belongs to the arsA ATPase family. As to quaternary structure, homodimer. Component of the Golgi to ER traffic (GET) complex, which is composed of GET1, GET2 and GET3. Within the complex, GET1 and GET2 form a heterotetramer which is stabilized by phosphatidylinositol binding and which binds to the GET3 homodimer. Interacts with the chloride channel protein GEF1.

The protein localises to the cytoplasm. It localises to the endoplasmic reticulum. Its subcellular location is the golgi apparatus. Its function is as follows. ATPase required for the post-translational delivery of tail-anchored (TA) proteins to the endoplasmic reticulum. Recognizes and selectively binds the transmembrane domain of TA proteins in the cytosol. This complex then targets to the endoplasmic reticulum by membrane-bound receptors GET1 and GET2, where the tail-anchored protein is released for insertion. This process is regulated by ATP binding and hydrolysis. ATP binding drives the homodimer towards the closed dimer state, facilitating recognition of newly synthesized TA membrane proteins. ATP hydrolysis is required for insertion. Subsequently, the homodimer reverts towards the open dimer state, lowering its affinity for the GET1-GET2 receptor, and returning it to the cytosol to initiate a new round of targeting. Cooperates with the HDEL receptor ERD2 to mediate the ATP-dependent retrieval of resident ER proteins that contain a C-terminal H-D-E-L retention signal from the Golgi to the ER. Involved in low-level resistance to the oxyanions arsenite and arsenate, and in heat tolerance. The polypeptide is ATPase GET3 (Candida tropicalis (strain ATCC MYA-3404 / T1) (Yeast)).